The chain runs to 142 residues: Small ribosomal subunit protein uS12 (142 aa).

It belongs to the universal ribosomal protein uS12 family. In terms of assembly, part of the 30S ribosomal subunit.

In terms of biological role, with S4 and S5 plays an important role in translational accuracy. Located at the interface of the 30S and 50S subunits. The protein is Small ribosomal subunit protein uS12 of Thermoplasma acidophilum (strain ATCC 25905 / DSM 1728 / JCM 9062 / NBRC 15155 / AMRC-C165).